A 116-amino-acid polypeptide reads, in one-letter code: Ribonuclease P protein component (116 aa).

This sequence belongs to the RnpA family. Consists of a catalytic RNA component (M1 or rnpB) and a protein subunit.

The catalysed reaction is Endonucleolytic cleavage of RNA, removing 5'-extranucleotides from tRNA precursor.. Its function is as follows. RNaseP catalyzes the removal of the 5'-leader sequence from pre-tRNA to produce the mature 5'-terminus. It can also cleave other RNA substrates such as 4.5S RNA. The protein component plays an auxiliary but essential role in vivo by binding to the 5'-leader sequence and broadening the substrate specificity of the ribozyme. The chain is Ribonuclease P protein component from Pseudanabaena sp. (strain PCC 6903).